Reading from the N-terminus, the 178-residue chain is Large ribosomal subunit protein uL6 (178 aa).

This sequence belongs to the universal ribosomal protein uL6 family. As to quaternary structure, part of the 50S ribosomal subunit.

In terms of biological role, this protein binds to the 23S rRNA, and is important in its secondary structure. It is located near the subunit interface in the base of the L7/L12 stalk, and near the tRNA binding site of the peptidyltransferase center. This Ligilactobacillus salivarius (strain UCC118) (Lactobacillus salivarius) protein is Large ribosomal subunit protein uL6.